A 284-amino-acid polypeptide reads, in one-letter code: Bifunctional protein FolD (284 aa).

Residues 165–167, S190, and I231 contribute to the NADP(+) site; that span reads GRS.

This sequence belongs to the tetrahydrofolate dehydrogenase/cyclohydrolase family. As to quaternary structure, homodimer.

It catalyses the reaction (6R)-5,10-methylene-5,6,7,8-tetrahydrofolate + NADP(+) = (6R)-5,10-methenyltetrahydrofolate + NADPH. It carries out the reaction (6R)-5,10-methenyltetrahydrofolate + H2O = (6R)-10-formyltetrahydrofolate + H(+). The protein operates within one-carbon metabolism; tetrahydrofolate interconversion. In terms of biological role, catalyzes the oxidation of 5,10-methylenetetrahydrofolate to 5,10-methenyltetrahydrofolate and then the hydrolysis of 5,10-methenyltetrahydrofolate to 10-formyltetrahydrofolate. The polypeptide is Bifunctional protein FolD (Streptococcus thermophilus (strain ATCC BAA-250 / LMG 18311)).